The primary structure comprises 73 residues: Conotoxin ArMKLT2-022 (73 aa).

An N-terminal signal peptide occupies residues Met-1–Gly-22. The propeptide occupies Glu-23 to Arg-40. Position 41 is a pyrrolidone carboxylic acid (Gln-41). 3 cysteine pairs are disulfide-bonded: Cys-42-Cys-56, Cys-49-Cys-60, and Cys-55-Cys-67.

This sequence belongs to the conotoxin O1 superfamily. As to expression, expressed by the venom duct.

It localises to the secreted. In Conus arenatus (Sand-dusted cone), this protein is Conotoxin ArMKLT2-022.